We begin with the raw amino-acid sequence, 49 residues long: Large ribosomal subunit protein eL40 (49 aa).

This sequence belongs to the eukaryotic ribosomal protein eL40 family.

This chain is Large ribosomal subunit protein eL40, found in Halorubrum lacusprofundi (strain ATCC 49239 / DSM 5036 / JCM 8891 / ACAM 34).